A 660-amino-acid polypeptide reads, in one-letter code: Bifunctional polymyxin resistance protein ArnA (660 aa).

Residues 1 to 304 (MKAVIFAYHD…ALGLVKGALL (304 aa)) form a formyltransferase ArnAFT region. His104 (proton donor; for formyltransferase activity) is an active-site residue. Residues Arg114 and 136 to 140 (TARAD) contribute to the (6R)-10-formyltetrahydrofolate site. Residues 314 to 660 (RRTRVLILGV…QTVDLPDAAQ (347 aa)) are dehydrogenase ArnADH. NAD(+) is bound by residues Asp347 and 368–369 (DI). Residues Ala393, Tyr398, and 432–433 (TS) contribute to the UDP-alpha-D-glucuronate site. Glu434 acts as the Proton acceptor; for decarboxylase activity in catalysis. Residues Arg460, Asn492, 526–535 (KLVDGGAQKR), and Tyr613 each bind UDP-alpha-D-glucuronate. Catalysis depends on Arg619, which acts as the Proton donor; for decarboxylase activity.

The protein in the N-terminal section; belongs to the Fmt family. UDP-L-Ara4N formyltransferase subfamily. It in the C-terminal section; belongs to the NAD(P)-dependent epimerase/dehydratase family. UDP-glucuronic acid decarboxylase subfamily. As to quaternary structure, homohexamer, formed by a dimer of trimers.

The enzyme catalyses UDP-alpha-D-glucuronate + NAD(+) = UDP-beta-L-threo-pentopyranos-4-ulose + CO2 + NADH. It catalyses the reaction UDP-4-amino-4-deoxy-beta-L-arabinose + (6R)-10-formyltetrahydrofolate = UDP-4-deoxy-4-formamido-beta-L-arabinose + (6S)-5,6,7,8-tetrahydrofolate + H(+). Its pathway is nucleotide-sugar biosynthesis; UDP-4-deoxy-4-formamido-beta-L-arabinose biosynthesis; UDP-4-deoxy-4-formamido-beta-L-arabinose from UDP-alpha-D-glucuronate: step 1/3. It participates in nucleotide-sugar biosynthesis; UDP-4-deoxy-4-formamido-beta-L-arabinose biosynthesis; UDP-4-deoxy-4-formamido-beta-L-arabinose from UDP-alpha-D-glucuronate: step 3/3. It functions in the pathway bacterial outer membrane biogenesis; lipopolysaccharide biosynthesis. Bifunctional enzyme that catalyzes the oxidative decarboxylation of UDP-glucuronic acid (UDP-GlcUA) to UDP-4-keto-arabinose (UDP-Ara4O) and the addition of a formyl group to UDP-4-amino-4-deoxy-L-arabinose (UDP-L-Ara4N) to form UDP-L-4-formamido-arabinose (UDP-L-Ara4FN). The modified arabinose is attached to lipid A and is required for resistance to polymyxin and cationic antimicrobial peptides. The polypeptide is Bifunctional polymyxin resistance protein ArnA (Sodalis glossinidius (strain morsitans)).